A 502-amino-acid chain; its full sequence is Probable cytochrome P450 6a23 (502 aa).

Cys-445 serves as a coordination point for heme.

This sequence belongs to the cytochrome P450 family. Requires heme as cofactor.

Its subcellular location is the endoplasmic reticulum membrane. It localises to the microsome membrane. Functionally, may be involved in the metabolism of insect hormones and in the breakdown of synthetic insecticides. This chain is Probable cytochrome P450 6a23 (Cyp6a23), found in Drosophila melanogaster (Fruit fly).